The following is a 131-amino-acid chain: Glycine cleavage system H protein (131 aa).

The Lipoyl-binding domain maps to 24-106 (VYCVGITEHA…YTDGWLFKIK (83 aa)). Lys65 carries the N6-lipoyllysine modification.

Belongs to the GcvH family. In terms of assembly, the glycine cleavage system is composed of four proteins: P, T, L and H. It depends on (R)-lipoate as a cofactor.

In terms of biological role, the glycine cleavage system catalyzes the degradation of glycine. The H protein shuttles the methylamine group of glycine from the P protein to the T protein. This Sodalis glossinidius (strain morsitans) protein is Glycine cleavage system H protein.